A 231-amino-acid polypeptide reads, in one-letter code: GFP-like fluorescent chromoprotein FP538 (231 aa).

At F65 the chain carries Phenylalanine amide; atypical. The segment at residues 66 to 68 (KYG) is a cross-link (2-tetrahydro-2-pyridyl-5-imidazolinone (Lys-Gly)). A 2,3-didehydrotyrosine modification is found at Y67.

It belongs to the GFP family. As to quaternary structure, homotetramer. In terms of processing, contains a chromophore consisting of modified amino acid residues. The chromophore is formed by autocatalytic backbone condensation between Xaa-N and Gly-(N+2), and oxidation of Tyr-(N+1) to didehydrotyrosine. In addition, the residue N lysine undergoes cyclization. The alpha-amino nitrogen is replaced by the epsilon-amino nitrogen, the peptide chain is broken, residue N-1 is released as an amide, and a double bond is formed between the alpha-carbon and the nitrogen so that a tetrahydropyridine ring results. Maturation of the chromophore requires nothing other than molecular oxygen. In terms of tissue distribution, tentacle and oral disk.

Functionally, pigment protein that is yellow in color. This Zoanthus sp. (Green polyp) protein is GFP-like fluorescent chromoprotein FP538.